The chain runs to 290 residues: Ubiquinone biosynthesis protein COQ4, mitochondrial (290 aa).

The N-terminal 32 residues, 1 to 32 (MAKRVCVGDLRKLAGSVSTPSRCILPPHARCF), are a transit peptide targeting the mitochondrion. Residues H168, D169, H172, and E184 each contribute to the Zn(2+) site. Residues 260–290 (KPPDLREMRKAEREAQKKDKEAKETMTRAAV) form a disordered region.

Belongs to the COQ4 family. In terms of assembly, component of a multi-subunit COQ enzyme complex, composed of at least COQ3, COQ4, COQ5, COQ6, COQ7 and COQ9. Zn(2+) serves as cofactor.

It is found in the mitochondrion inner membrane. The enzyme catalyses a 4-hydroxy-3-methoxy-5-(all-trans-polyprenyl)benzoate + H(+) = a 2-methoxy-6-(all-trans-polyprenyl)phenol + CO2. The protein operates within cofactor biosynthesis; ubiquinone biosynthesis. Functionally, lyase that catalyzes the C1-decarboxylation of 4-hydroxy-3-methoxy-5-(all-trans-polyprenyl)benzoic acid into 2-methoxy-6-(all-trans-polyprenyl)phenol during ubiquinone biosynthesis. The sequence is that of Ubiquinone biosynthesis protein COQ4, mitochondrial from Phaeosphaeria nodorum (strain SN15 / ATCC MYA-4574 / FGSC 10173) (Glume blotch fungus).